A 142-amino-acid chain; its full sequence is MAP3K7 C-terminal-like protein (142 aa).

Detected in lung and peripheral blood leukocytes. Expressed predominantly in peripheral blood leukocytes and ubiquitously in adult and fetal tissues. Also expressed strongly in breast carcinoma GI-101, colon adenocarcinoma GI-112, and prostatic adenocarcinoma PC3.

The protein is MAP3K7 C-terminal-like protein (MAP3K7CL) of Homo sapiens (Human).